The sequence spans 214 residues: Ras-related protein Rab-17 (214 aa).

S29 is subject to Phosphoserine. The GTP site is built by G31, K32, T33, and T50. Residues T33, T50, and D73 each contribute to the Mg(2+) site. Positions 43–54 match the Switch 1 motif; it reads DFSNVLPTVGCA. Positions 75-91 match the Switch 2 motif; it reads AGQEKYQSVCHLYFRGA. Residues G76, N132, K133, D135, and A163 each coordinate GTP. The tract at residues 183-204 is disordered; it reads RAGDTGSSRPQEGEAVALNQEP. Residues C211 and C212 are each lipidated (S-geranylgeranyl cysteine).

Belongs to the small GTPase superfamily. Rab family. Mg(2+) serves as cofactor. As to expression, expressed in kidney, liver, and intestine mainly by epithelial cells. Expressed in hippocampus (at protein level).

Its subcellular location is the recycling endosome membrane. It is found in the melanosome. It localises to the cell projection. The protein resides in the dendrite. It catalyses the reaction GTP + H2O = GDP + phosphate + H(+). Regulated by guanine nucleotide exchange factors (GEFs) which promote the exchange of bound GDP for free GTP. Regulated by GTPase activating proteins (GAPs) which increase the GTP hydrolysis activity. Inhibited by GDP dissociation inhibitors (GDIs). The small GTPases Rab are key regulators of intracellular membrane trafficking, from the formation of transport vesicles to their fusion with membranes. Rabs cycle between an inactive GDP-bound form and an active GTP-bound form that is able to recruit to membranes different set of downstream effectors directly responsible for vesicle formation, movement, tethering and fusion. RAB17 is involved in transcytosis, the directed movement of endocytosed material through the cell and its exocytosis from the plasma membrane at the opposite side. Mainly observed in epithelial cells, transcytosis mediates, for instance, the transcellular transport of immunoglobulins from the basolateral surface to the apical surface. Most probably controls membrane trafficking through apical recycling endosomes in a post-endocytic step of transcytosis. Required for melanosome transport and release from melanocytes, it also regulates dendrite and dendritic spine development. May also play a role in cell migration. In Mus musculus (Mouse), this protein is Ras-related protein Rab-17.